A 271-amino-acid polypeptide reads, in one-letter code: Beta-lysine N(6)-acetyltransferase (271 aa).

The disordered stretch occupies residues 86–122 (LRKDRGTGKNQKKKKISRKKDNWKKRKEKSRLPEGYT). A compositionally biased stretch (basic residues) spans 95–114 (NQKKKKISRKKDNWKKRKEK). An N-acetyltransferase domain is found at 121-269 (YTLRPAVQAD…GFEDMNIWCR (149 aa)).

The protein belongs to the acetyltransferase family.

It carries out the reaction (3S)-3,6-diaminohexanoate + acetyl-CoA = (3S)-6-acetamido-3-aminohexanoate + CoA + H(+). Catalyzes the acetylation of beta-lysine to N6-acetyl-beta-lysine, a compatible solute produced by methanogenic archaea that helps cells to cope with salt stress. The protein is Beta-lysine N(6)-acetyltransferase of Methanosarcina mazei (strain ATCC BAA-159 / DSM 3647 / Goe1 / Go1 / JCM 11833 / OCM 88) (Methanosarcina frisia).